The primary structure comprises 86 residues: Cell division topological specificity factor (86 aa).

It belongs to the MinE family.

Functionally, prevents the cell division inhibition by proteins MinC and MinD at internal division sites while permitting inhibition at polar sites. This ensures cell division at the proper site by restricting the formation of a division septum at the midpoint of the long axis of the cell. This Parasynechococcus marenigrum (strain WH8102) protein is Cell division topological specificity factor.